Reading from the N-terminus, the 352-residue chain is Nicotinate-nucleotide--dimethylbenzimidazole phosphoribosyltransferase (352 aa).

Catalysis depends on Glu318, which acts as the Proton acceptor.

This sequence belongs to the CobT family.

The catalysed reaction is 5,6-dimethylbenzimidazole + nicotinate beta-D-ribonucleotide = alpha-ribazole 5'-phosphate + nicotinate + H(+). It participates in nucleoside biosynthesis; alpha-ribazole biosynthesis; alpha-ribazole from 5,6-dimethylbenzimidazole: step 1/2. In terms of biological role, catalyzes the synthesis of alpha-ribazole-5'-phosphate from nicotinate mononucleotide (NAMN) and 5,6-dimethylbenzimidazole (DMB). The sequence is that of Nicotinate-nucleotide--dimethylbenzimidazole phosphoribosyltransferase from Azotobacter vinelandii (strain DJ / ATCC BAA-1303).